Reading from the N-terminus, the 334-residue chain is Glyceraldehyde-3-phosphate dehydrogenase (334 aa).

Residues 12–13, aspartate 37, arginine 81, and serine 123 contribute to the NAD(+) site; that span reads RI. D-glyceraldehyde 3-phosphate-binding positions include 153–155 and threonine 184; that span reads SCT. The active-site Nucleophile is cysteine 154. Position 185 (asparagine 185) interacts with NAD(+). Residues arginine 199, 212-213, and arginine 235 each bind D-glyceraldehyde 3-phosphate; that span reads TG. Asparagine 314 lines the NAD(+) pocket.

The protein belongs to the glyceraldehyde-3-phosphate dehydrogenase family. In terms of assembly, homotetramer.

The protein localises to the cytoplasm. It catalyses the reaction D-glyceraldehyde 3-phosphate + phosphate + NAD(+) = (2R)-3-phospho-glyceroyl phosphate + NADH + H(+). It participates in carbohydrate degradation; glycolysis; pyruvate from D-glyceraldehyde 3-phosphate: step 1/5. In terms of biological role, catalyzes the oxidative phosphorylation of glyceraldehyde 3-phosphate (G3P) to 1,3-bisphosphoglycerate (BPG) using the cofactor NAD. The first reaction step involves the formation of a hemiacetal intermediate between G3P and a cysteine residue, and this hemiacetal intermediate is then oxidized to a thioester, with concomitant reduction of NAD to NADH. The reduced NADH is then exchanged with the second NAD, and the thioester is attacked by a nucleophilic inorganic phosphate to produce BPG. In Pseudomonas aeruginosa (strain ATCC 15692 / DSM 22644 / CIP 104116 / JCM 14847 / LMG 12228 / 1C / PRS 101 / PAO1), this protein is Glyceraldehyde-3-phosphate dehydrogenase (gap).